Here is a 96-residue protein sequence, read N- to C-terminus: Putative pterin-4-alpha-carbinolamine dehydratase (96 aa).

Belongs to the pterin-4-alpha-carbinolamine dehydratase family.

It catalyses the reaction (4aS,6R)-4a-hydroxy-L-erythro-5,6,7,8-tetrahydrobiopterin = (6R)-L-erythro-6,7-dihydrobiopterin + H2O. The protein is Putative pterin-4-alpha-carbinolamine dehydratase of Novosphingobium aromaticivorans (strain ATCC 700278 / DSM 12444 / CCUG 56034 / CIP 105152 / NBRC 16084 / F199).